A 1195-amino-acid chain; its full sequence is EST/SMG-like protein 2 (1195 aa).

Polar residues-rich tracts occupy residues 1–10 (MPETSVQNPL), 18–35 (TRSMFLSASQQQRPSATP), and 55–68 (VLNPSSKRQNSNSV). 4 disordered regions span residues 1–38 (MPETSVQNPLRLSENENTRSMFLSASQQQRPSATPSFP), 55–130 (VLNP…VGIT), 179–268 (SKSE…PASN), and 610–643 (DKKERKKSSNNDSSVTESSTGNSRNDNEDDDEIM). 2 stretches are compositionally biased toward basic and acidic residues: residues 83 to 109 (RFSDIEGKNNDHTYPERTTVKESEKNP) and 197 to 208 (INDKDNSARDQD). Low complexity-rich tracts occupy residues 210 to 252 (NNSG…NNSD) and 619 to 629 (NNDSSVTESST). A PINc domain is found at 1025 to 1164 (TYFVFDATSW…LISDDDAMKK (140 aa)).

In terms of assembly, transiently interacts with PEX14.

The protein resides in the cytoplasm. The protein localises to the nucleus. It is found in the peroxisome. May be involved in the regulation of gene expression responses of environment-sensing pathways. In Saccharomyces cerevisiae (strain ATCC 204508 / S288c) (Baker's yeast), this protein is EST/SMG-like protein 2.